Reading from the N-terminus, the 193-residue chain is Hydroxyacylglutathione hydrolase-like protein (193 aa).

5 residues coordinate Zn(2+): His-54, His-56, Asp-58, His-59, and His-110.

It belongs to the metallo-beta-lactamase superfamily. Glyoxalase II family. It depends on Zn(2+) as a cofactor.

Functionally, hydrolase acting on ester bonds. The protein is Hydroxyacylglutathione hydrolase-like protein (HAGHL) of Bos taurus (Bovine).